The primary structure comprises 248 residues: Probable transcriptional regulatory protein FTN_1028 (248 aa).

Belongs to the TACO1 family.

The protein resides in the cytoplasm. The polypeptide is Probable transcriptional regulatory protein FTN_1028 (Francisella tularensis subsp. novicida (strain U112)).